The sequence spans 1429 residues: Inactive rhomboid protein 1 (1429 aa).

3 disordered regions span residues 1-36, 560-579, and 740-766; these read MSSN…STRR, GNED…PDRP, and TSAL…QPGA. At 1-843 the chain is on the cytoplasmic side; it reads MSSNGSDLGH…RPFFTYWINT (843 aa). The segment covering 22–33 has biased composition (low complexity); the sequence is SVHSSMRGSMSS. 2 stretches are compositionally biased toward polar residues: residues 564–573 and 740–763; these read AGQSNGTNGN and TSAL…SSHQ. The helical transmembrane segment at 844-864 threads the bilayer; it reads VQVVVLILSIICYGIAPIGIG. Residues 865 to 1099 are Lumenal-facing; the sequence is SEQKTGQVLV…PDQLYRLLTS (235 aa). A helical membrane pass occupies residues 1100 to 1120; that stretch reads LCMHAGILHLAITLIFQHLFL. The Cytoplasmic segment spans residues 1121-1131; the sequence is ADLERLIGTVR. A helical membrane pass occupies residues 1132–1152; that stretch reads TAIVYIMSGFAGNLTSAILVP. Over 1153–1156 the chain is Lumenal; it reads HRPE. A helical transmembrane segment spans residues 1157 to 1177; it reads VGPSASLSGVVASLIALLVWM. The Cytoplasmic segment spans residues 1178 to 1186; it reads HWKYLHKPH. A helical membrane pass occupies residues 1187–1207; the sequence is IALFKLLLLCSVLVGIGTLPY. The Lumenal segment spans residues 1208-1210; the sequence is QLN. Residues 1211-1231 traverse the membrane as a helical segment; sequence FLGLLAGVICGCLLTMSLVPF. At 1232–1245 the chain is on the cytoplasmic side; sequence TTFSKYGRKKKINL. The helical transmembrane segment at 1246–1266 threads the bilayer; sequence IWTCVLFHVVVYTAMIVTFYI. Topologically, residues 1267–1429 are lumenal; it reads HPSEFHSISF…INNNTEFNVL (163 aa).

It belongs to the peptidase S54 family. As to expression, specifically expressed in the nervous system and in brain.

It localises to the endoplasmic reticulum membrane. Functionally, rhomboid protease-like protein which has no protease activity but regulates the secretion of several ligands of the epidermal growth factor receptor. Indirectly activates the epidermal growth factor receptor signaling pathway and may thereby regulate sleep, cell survival, proliferation and migration. The sequence is that of Inactive rhomboid protein 1 (rho-5) from Drosophila melanogaster (Fruit fly).